Consider the following 57-residue polypeptide: MIQSPTSFLIVLILLWCKLVISCFRECIVALQQLIQVLLQIINSNLQSRLLLWHSLD.

Positions 1–23 (MIQSPTSFLIVLILLWCKLVISC) are cleaved as a signal peptide.

Functionally, involved in resistance to IFN. The sequence is that of Non-structural protein 3a from Avian infectious bronchitis virus (strain UK/183/66) (IBV).